The primary structure comprises 238 residues: MGQKVNPHGLRVGIIKDWDTKWYANKRDFGDLLVEDNEIRKFVKKKLFLSGVSRIEIERAANNKVKVNVHTAKPGMVIGKGGQGVEDLRKDIEKISKKNVAVNVIEVKRPETDAQLVAENVAFQLERRVSFRRAMKQVMQRAMKSGAKGIKVATSGRLGGAEMARTEGYSQGNVPLQTLRADINYGFAEADTTYGKLGIKVWIYKGEVLPTKGRVASNNEEVVGNVEKNTRGKKREAK.

The KH type-2 domain maps to 39-108 (IRKFVKKKLF…NVAVNVIEVK (70 aa)).

The protein belongs to the universal ribosomal protein uS3 family. Part of the 30S ribosomal subunit. Forms a tight complex with proteins S10 and S14.

Functionally, binds the lower part of the 30S subunit head. Binds mRNA in the 70S ribosome, positioning it for translation. This chain is Small ribosomal subunit protein uS3, found in Alkaliphilus oremlandii (strain OhILAs) (Clostridium oremlandii (strain OhILAs)).